A 353-amino-acid polypeptide reads, in one-letter code: Mas-related G-protein coupled receptor member B5 (353 aa).

The Extracellular portion of the chain corresponds to 1–67; it reads MPDSPTESYG…SCIITFNTLN (67 aa). Residues Asn-26 and Asn-44 are each glycosylated (N-linked (GlcNAc...) asparagine). A helical membrane pass occupies residues 68-90; the sequence is FLTATISVVGTAGNATVLRLLGF. Residues 91-96 lie on the Cytoplasmic side of the membrane; that stretch reads HMHRYA. Residues 97 to 117 form a helical membrane-spanning segment; it reads FSVYVFNLAGADFLYLCTQTV. The Extracellular segment spans residues 118–131; that stretch reads YSLECVLQFDNSYF. The chain crosses the membrane as a helical span at residues 132-152; it reads YFLLTILMFAYLAALCMIPAI. Residues 153–180 lie on the Cytoplasmic side of the membrane; that stretch reads STERCLSVTWPIWYHCQRPRHTSATVCA. Residues 181-201 traverse the membrane as a helical segment; the sequence is LFWAFSLLLRLLLGQGCGFLF. Residues 202–213 lie on the Extracellular side of the membrane; the sequence is GKYDYYFCRYCS. The helical transmembrane segment at 214-234 threads the bilayer; sequence FITTAFLIVLFVVPFVSSLAM. Residues 235-253 lie on the Cytoplasmic side of the membrane; it reads LTKIICGSHRIPVTRFYVT. A helical membrane pass occupies residues 254-274; it reads IAVTVLVFTFFGLPVGIISLL. Residues 275–289 lie on the Extracellular side of the membrane; the sequence is LPRIVVFRGVFYIYK. The helical transmembrane segment at 290–310 threads the bilayer; it reads IVTFLYSVNCCANPIIYFLIG. The Cytoplasmic portion of the chain corresponds to 311–353; the sequence is SIRHHRLQRQSLKLLLQRAMQDTPEEEGGVKGPSQKSNELEIV. The segment at 333–353 is disordered; the sequence is TPEEEGGVKGPSQKSNELEIV.

Belongs to the G-protein coupled receptor 1 family. Mas subfamily. Expressed strongly in newborn dorsal root ganglia, adult dorsal root ganglia and trigeminal ganlia.

It is found in the membrane. Orphan receptor. Probably involved in the function of nociceptive neurons. May regulate nociceptor function and/or development, including the sensation or modulation of pain. This chain is Mas-related G-protein coupled receptor member B5 (Mrgprb5), found in Rattus norvegicus (Rat).